Reading from the N-terminus, the 178-residue chain is Crossover junction endodeoxyribonuclease RuvC (178 aa).

Residues Asp-11, Glu-71, and Asp-143 contribute to the active site. Mg(2+) contacts are provided by Asp-11, Glu-71, and Asp-143.

The protein belongs to the RuvC family. In terms of assembly, homodimer which binds Holliday junction (HJ) DNA. The HJ becomes 2-fold symmetrical on binding to RuvC with unstacked arms; it has a different conformation from HJ DNA in complex with RuvA. In the full resolvosome a probable DNA-RuvA(4)-RuvB(12)-RuvC(2) complex forms which resolves the HJ. Mg(2+) is required as a cofactor.

It localises to the cytoplasm. The enzyme catalyses Endonucleolytic cleavage at a junction such as a reciprocal single-stranded crossover between two homologous DNA duplexes (Holliday junction).. In terms of biological role, the RuvA-RuvB-RuvC complex processes Holliday junction (HJ) DNA during genetic recombination and DNA repair. Endonuclease that resolves HJ intermediates. Cleaves cruciform DNA by making single-stranded nicks across the HJ at symmetrical positions within the homologous arms, yielding a 5'-phosphate and a 3'-hydroxyl group; requires a central core of homology in the junction. The consensus cleavage sequence is 5'-(A/T)TT(C/G)-3'. Cleavage occurs on the 3'-side of the TT dinucleotide at the point of strand exchange. HJ branch migration catalyzed by RuvA-RuvB allows RuvC to scan DNA until it finds its consensus sequence, where it cleaves and resolves the cruciform DNA. The chain is Crossover junction endodeoxyribonuclease RuvC from Neisseria meningitidis serogroup C / serotype 2a (strain ATCC 700532 / DSM 15464 / FAM18).